A 533-amino-acid polypeptide reads, in one-letter code: 1-aminocyclopropane-1-carboxylate synthase 5 (533 aa).

K358 is subject to N6-(pyridoxal phosphate)lysine.

Belongs to the class-I pyridoxal-phosphate-dependent aminotransferase family. Pyridoxal 5'-phosphate serves as cofactor. As to expression, expressed in shoots and leaf blades. Expressed at low levels in leaf sheaths. Expressed in vasculature of roots and shoots.

The catalysed reaction is S-adenosyl-L-methionine = 1-aminocyclopropane-1-carboxylate + S-methyl-5'-thioadenosine + H(+). It participates in alkene biosynthesis; ethylene biosynthesis via S-adenosyl-L-methionine; ethylene from S-adenosyl-L-methionine: step 1/2. In terms of biological role, catalyzes the formation of 1-aminocyclopropane-1-carboxylate, a direct precursor of ethylene in higher plants. This chain is 1-aminocyclopropane-1-carboxylate synthase 5, found in Oryza sativa subsp. japonica (Rice).